The sequence spans 284 residues: 2-dehydro-3-deoxyphosphooctonate aldolase (284 aa).

The protein belongs to the KdsA family.

It localises to the cytoplasm. The catalysed reaction is D-arabinose 5-phosphate + phosphoenolpyruvate + H2O = 3-deoxy-alpha-D-manno-2-octulosonate-8-phosphate + phosphate. It functions in the pathway carbohydrate biosynthesis; 3-deoxy-D-manno-octulosonate biosynthesis; 3-deoxy-D-manno-octulosonate from D-ribulose 5-phosphate: step 2/3. Its pathway is bacterial outer membrane biogenesis; lipopolysaccharide biosynthesis. This is 2-dehydro-3-deoxyphosphooctonate aldolase from Klebsiella pneumoniae subsp. pneumoniae (strain ATCC 700721 / MGH 78578).